A 440-amino-acid chain; its full sequence is Protein disulfide-isomerase A6 homolog (440 aa).

A signal peptide spans 1–18; it reads MALIKLLLASLAITSVCG. 2 Thioredoxin domains span residues 19-131 and 127-273; these read MYSK…AEAK and LAEA…ARAQ. Residues cysteine 54 and cysteine 57 each act as nucleophile in the active site. A disulfide bridge connects residues cysteine 54 and cysteine 57. The segment at 138-164 is disordered; sequence LGGKSSGSSSSGSGSGSGKRGGGGSGN. Over residues 139-149 the composition is skewed to low complexity; it reads GGKSSGSSSSG. A compositionally biased stretch (gly residues) spans 150-163; that stretch reads SGSGSGKRGGGGSG. Active-site nucleophile residues include cysteine 194 and cysteine 197. A disulfide bond links cysteine 194 and cysteine 197. A disordered region spans residues 404-426; that stretch reads DGFPKIQKTEKWDGKDGALPAED. Residues 410-419 show a composition bias toward basic and acidic residues; the sequence is QKTEKWDGKD. Residues 437-440 carry the Prevents secretion from ER motif; the sequence is KTEL.

The protein belongs to the protein disulfide isomerase family.

The protein localises to the endoplasmic reticulum lumen. The catalysed reaction is Catalyzes the rearrangement of -S-S- bonds in proteins.. In terms of biological role, may function as a chaperone that inhibits aggregation of misfolded proteins. May negatively regulate the unfolded protein response (UPR) through binding to UPR sensors. This is Protein disulfide-isomerase A6 homolog from Caenorhabditis elegans.